The primary structure comprises 455 residues: Anaerobic glycerol-3-phosphate dehydrogenase subunit B (455 aa).

This sequence belongs to the anaerobic G-3-P dehydrogenase subunit B family. As to quaternary structure, composed of a catalytic GlpA/B dimer and of membrane bound GlpC. Requires FMN as cofactor.

The catalysed reaction is a quinone + sn-glycerol 3-phosphate = dihydroxyacetone phosphate + a quinol. Its pathway is polyol metabolism; glycerol degradation via glycerol kinase pathway; glycerone phosphate from sn-glycerol 3-phosphate (anaerobic route): step 1/1. Functionally, conversion of glycerol 3-phosphate to dihydroxyacetone. Uses fumarate or nitrate as electron acceptor. The sequence is that of Anaerobic glycerol-3-phosphate dehydrogenase subunit B from Aliivibrio fischeri (strain ATCC 700601 / ES114) (Vibrio fischeri).